The sequence spans 693 residues: Elongation factor G (693 aa).

The 277-residue stretch at 8–284 (DMTRNVGIMA…AIVNYMPAPT (277 aa)) folds into the tr-type G domain. GTP-binding positions include 17–24 (AHIDAGKT), 81–85 (DTPGH), and 135–138 (NKMD).

The protein belongs to the TRAFAC class translation factor GTPase superfamily. Classic translation factor GTPase family. EF-G/EF-2 subfamily.

The protein resides in the cytoplasm. Its function is as follows. Catalyzes the GTP-dependent ribosomal translocation step during translation elongation. During this step, the ribosome changes from the pre-translocational (PRE) to the post-translocational (POST) state as the newly formed A-site-bound peptidyl-tRNA and P-site-bound deacylated tRNA move to the P and E sites, respectively. Catalyzes the coordinated movement of the two tRNA molecules, the mRNA and conformational changes in the ribosome. The sequence is that of Elongation factor G from Fusobacterium nucleatum subsp. nucleatum (strain ATCC 25586 / DSM 15643 / BCRC 10681 / CIP 101130 / JCM 8532 / KCTC 2640 / LMG 13131 / VPI 4355).